The chain runs to 25 residues: ATP-dependent 6-phosphofructokinase 2 (25 aa).

Gly-11 is an ATP binding site.

The protein belongs to the phosphofructokinase type A (PFKA) family. ATP-dependent PFK group I subfamily. Prokaryotic clade 'B1' sub-subfamily. As to quaternary structure, homotetramer. Mg(2+) is required as a cofactor.

It is found in the cytoplasm. It carries out the reaction beta-D-fructose 6-phosphate + ATP = beta-D-fructose 1,6-bisphosphate + ADP + H(+). The protein operates within carbohydrate degradation; glycolysis; D-glyceraldehyde 3-phosphate and glycerone phosphate from D-glucose: step 3/4. Its activity is regulated as follows. In contrast with PFK1 this enzyme is not affected by phosphoenolpyruvate. Its function is as follows. Catalyzes the phosphorylation of D-fructose 6-phosphate to fructose 1,6-bisphosphate by ATP, the first committing step of glycolysis. The sequence is that of ATP-dependent 6-phosphofructokinase 2 (pfkA2) from Thermus thermophilus (strain ATCC 27634 / DSM 579 / HB8).